The chain runs to 363 residues: Endopolygalacturonase 1 (363 aa).

The first 17 residues, 1-17 (MVSYLFVLGALASVAIA), serve as a signal peptide directing secretion. A propeptide spanning residues 18–26 (SPVPELKAR) is cleaved from the precursor. An intrachain disulfide couples C29 to C44. PbH1 repeat units lie at residues 188-209 (STGVYISGADVKNQDDCLAVNS), 210-230 (GTNITFTGGTCSGGHGLSIGS), 239-260 (VKSVSITNSKIINSDNGVRIKT), and 268-290 (VSDITYSGITLSNIAKYGIVIEQ). D202 serves as the catalytic Proton donor. C204 and C220 are joined by a disulfide. A glycan (N-linked (GlcNAc...) asparagine) is linked at N212. H224 is an active-site residue. 2 disulfide bridges follow: C330–C333 and C352–C363.

This sequence belongs to the glycosyl hydrolase 28 family.

Its subcellular location is the secreted. It catalyses the reaction (1,4-alpha-D-galacturonosyl)n+m + H2O = (1,4-alpha-D-galacturonosyl)n + (1,4-alpha-D-galacturonosyl)m.. Its function is as follows. Involved in maceration and soft-rotting of plant tissue. Hydrolyzes the 1,4-alpha glycosidic bonds of de-esterified pectate in the smooth region of the plant cell wall. This chain is Endopolygalacturonase 1 (PG1), found in Colletotrichum lindemuthianum (Bean anthracnose fungus).